The following is a 447-amino-acid chain: N-succinylarginine dihydrolase (447 aa).

Residues 19–28, Asn110, and 137–138 each bind substrate; these read AGLSFGNEAS and HR. Glu174 is an active-site residue. Arg212 provides a ligand contact to substrate. The active site involves His248. Substrate-binding residues include Asp250 and Asn359. The Nucleophile role is filled by Cys365.

This sequence belongs to the succinylarginine dihydrolase family. As to quaternary structure, homodimer.

It catalyses the reaction N(2)-succinyl-L-arginine + 2 H2O + 2 H(+) = N(2)-succinyl-L-ornithine + 2 NH4(+) + CO2. The protein operates within amino-acid degradation; L-arginine degradation via AST pathway; L-glutamate and succinate from L-arginine: step 2/5. Catalyzes the hydrolysis of N(2)-succinylarginine into N(2)-succinylornithine, ammonia and CO(2). This Salmonella dublin (strain CT_02021853) protein is N-succinylarginine dihydrolase.